A 259-amino-acid polypeptide reads, in one-letter code: Phosphate import ATP-binding protein PstB (259 aa).

The ABC transporter domain maps to 2 to 248 (GQRIDVNHEN…ITMFNNPQNE (247 aa)). 37 to 44 (GPSGCGKS) provides a ligand contact to ATP.

This sequence belongs to the ABC transporter superfamily. Phosphate importer (TC 3.A.1.7) family. The complex is composed of two ATP-binding proteins (PstB), two transmembrane proteins (PstC and PstA) and a solute-binding protein (PstS).

The protein localises to the cell membrane. The catalysed reaction is phosphate(out) + ATP + H2O = ADP + 2 phosphate(in) + H(+). In terms of biological role, part of the ABC transporter complex PstSACB involved in phosphate import. Responsible for energy coupling to the transport system. This Bifidobacterium longum (strain NCC 2705) protein is Phosphate import ATP-binding protein PstB.